The chain runs to 35 residues: Dolichyl-diphosphooligosaccharide--protein glycosyltransferase subunit 4B (35 aa).

Residues 1–8 (MFDDQDLG) are Lumenal-facing. Residues 9–29 (FFANFLGIFIFIMVIAYHFVV) form a helical membrane-spanning segment. At 30–35 (AEPKFE) the chain is on the cytoplasmic side.

The protein belongs to the OST4 family. Component of the oligosaccharyltransferase (OST) complex.

The protein resides in the endoplasmic reticulum membrane. Subunit of the oligosaccharyl transferase (OST) complex that catalyzes the initial transfer of a defined glycan (Glc(3)Man(9)GlcNAc(2) in eukaryotes) from the lipid carrier dolichol-pyrophosphate to an asparagine residue within an Asn-X-Ser/Thr consensus motif in nascent polypeptide chains, the first step in protein N-glycosylation. N-glycosylation occurs cotranslationally and the complex associates with the Sec61 complex at the channel-forming translocon complex that mediates protein translocation across the endoplasmic reticulum (ER). All subunits are required for a maximal enzyme activity. This Arabidopsis thaliana (Mouse-ear cress) protein is Dolichyl-diphosphooligosaccharide--protein glycosyltransferase subunit 4B (OST4B).